The primary structure comprises 298 residues: Lactose transport system permease protein LacF (298 aa).

The next 6 helical transmembrane spans lie at 17 to 37 (GWLF…YPIL), 77 to 97 (VIFF…LAAM), 112 to 132 (MIFL…KSMF), 151 to 171 (PIGW…AITW), 208 to 228 (AFLT…TSTI), and 269 to 289 (FSYA…LSFL). The ABC transmembrane type-1 domain occupies 73–290 (LQNTVIFFVV…LMVAVLSFLQ (218 aa)).

It belongs to the binding-protein-dependent transport system permease family. MalFG subfamily.

It is found in the cell inner membrane. Part of the binding-protein-dependent transport system for lactose. Probably responsible for the translocation of the substrate across the membrane. In Rhizobium radiobacter (Agrobacterium tumefaciens), this protein is Lactose transport system permease protein LacF (lacF).